The sequence spans 348 residues: Large ribosomal subunit protein uL3m (348 aa).

A mitochondrion-targeting transit peptide spans 1-40 (MPGWRLLTQVGAQVLGRLGDGLGAALGPGNRTHIWLFVRG).

This sequence belongs to the universal ribosomal protein uL3 family. In terms of assembly, component of the mitochondrial large ribosomal subunit (mt-LSU). Mature mammalian 55S mitochondrial ribosomes consist of a small (28S) and a large (39S) subunit. The 28S small subunit contains a 12S ribosomal RNA (12S mt-rRNA) and 30 different proteins. The 39S large subunit contains a 16S rRNA (16S mt-rRNA), a copy of mitochondrial valine transfer RNA (mt-tRNA(Val)), which plays an integral structural role, and 52 different proteins.

The protein localises to the mitochondrion. The sequence is that of Large ribosomal subunit protein uL3m (MRPL3) from Homo sapiens (Human).